A 521-amino-acid chain; its full sequence is Protein DETOXIFICATION 44, chloroplastic (521 aa).

A chloroplast-targeting transit peptide spans 1-31 (MAAVATSFCFSPHRSPSRFGNPNSSIRRTIV). Residues 12–73 (PHRSPSRFGN…DHDHKPDPGI (62 aa)) are disordered. Polar residues-rich tracts occupy residues 18–27 (RFGNPNSSIR) and 42–61 (AVST…TSQN). Transmembrane regions (helical) follow at residues 80 to 100 (IMSI…TSLV), 103 to 123 (AFVG…VSVF), 167 to 187 (VSTS…ALSL), 213 to 235 (RLRA…FRGF), 242 to 262 (LYAV…LIFV), 268 to 288 (SGAA…LLWK), 314 to 334 (LLIG…SLAA), 345 to 365 (QIVL…AIAA), 385 to 405 (LFGV…VLFI), 423 to 443 (IALS…LAFV), 454 to 474 (FGFA…FMLV), and 481 to 503 (LAGI…AWRL).

It belongs to the multi antimicrobial extrusion (MATE) (TC 2.A.66.1) family. In terms of tissue distribution, expressed in shoots.

Its subcellular location is the plastid. It is found in the chloroplast membrane. The chain is Protein DETOXIFICATION 44, chloroplastic from Arabidopsis thaliana (Mouse-ear cress).